We begin with the raw amino-acid sequence, 930 residues long: Isoleucine--tRNA ligase (930 aa).

The 'HIGH' region motif lies at 57 to 67; that stretch reads PYANGNIHVGH. L-isoleucyl-5'-AMP is bound at residue Glu554. The 'KMSKS' region motif lies at 595–599; the sequence is KMSKS. Residue Lys598 participates in ATP binding. Zn(2+)-binding residues include Cys888, Cys891, Cys908, and Cys911.

It belongs to the class-I aminoacyl-tRNA synthetase family. IleS type 1 subfamily. In terms of assembly, monomer. Zn(2+) serves as cofactor.

The protein resides in the cytoplasm. The catalysed reaction is tRNA(Ile) + L-isoleucine + ATP = L-isoleucyl-tRNA(Ile) + AMP + diphosphate. Functionally, catalyzes the attachment of isoleucine to tRNA(Ile). As IleRS can inadvertently accommodate and process structurally similar amino acids such as valine, to avoid such errors it has two additional distinct tRNA(Ile)-dependent editing activities. One activity is designated as 'pretransfer' editing and involves the hydrolysis of activated Val-AMP. The other activity is designated 'posttransfer' editing and involves deacylation of mischarged Val-tRNA(Ile). This Streptococcus gordonii (strain Challis / ATCC 35105 / BCRC 15272 / CH1 / DL1 / V288) protein is Isoleucine--tRNA ligase.